The chain runs to 358 residues: DnaJ homolog subfamily C member 18 (358 aa).

The 65-residue stretch at 82-146 folds into the J domain; it reads NYYEILGVSR…DKRLRYDEYG (65 aa). The chain crosses the membrane as a helical span at residues 228-248; the sequence is AFIQLLPVLVIVIISVITQLL.

The protein localises to the endoplasmic reticulum membrane. The sequence is that of DnaJ homolog subfamily C member 18 (DNAJC18) from Bos taurus (Bovine).